We begin with the raw amino-acid sequence, 334 residues long: Glutamyl-tRNA reductase (334 aa).

Substrate contacts are provided by residues 49–52 (TCNR), S107, 112–114 (EDQ), and Q118. The Nucleophile role is filled by C50. 186–191 (GNGEMG) contributes to the NADP(+) binding site.

The protein belongs to the glutamyl-tRNA reductase family. In terms of assembly, homodimer.

It catalyses the reaction (S)-4-amino-5-oxopentanoate + tRNA(Glu) + NADP(+) = L-glutamyl-tRNA(Glu) + NADPH + H(+). Its pathway is porphyrin-containing compound metabolism; protoporphyrin-IX biosynthesis; 5-aminolevulinate from L-glutamyl-tRNA(Glu): step 1/2. Its function is as follows. Catalyzes the NADPH-dependent reduction of glutamyl-tRNA(Glu) to glutamate 1-semialdehyde (GSA). In Alkaliphilus oremlandii (strain OhILAs) (Clostridium oremlandii (strain OhILAs)), this protein is Glutamyl-tRNA reductase.